Reading from the N-terminus, the 298-residue chain is PYK10-binding protein 1 (298 aa).

An N-acetylalanine modification is found at Ala2. Jacalin-type lectin domains follow at residues 2-142 (AQKV…YFAP) and 152-295 (AKQL…HVRP). A Phosphoserine modification is found at Ser20.

This sequence belongs to the jacalin lectin family. As to quaternary structure, component of the PYK10 complex, at least composed of PYK10/BGLU23, BGLU21, BGLU22, JAL22, JAL23, PBP1/JAL30, PBP2/JAL31, JAL32, JAL33, JAL34, JAL35, GLL22 and GLL23. As to expression, expressed exclusively in roots.

Its subcellular location is the cytoplasm. In terms of biological role, inhibitor-type lectin that may regulate the correct polymerization of BGLU23/PYK10 upon tissue damage. Activates BGLU21, BGLU22 and BGLU23. This chain is PYK10-binding protein 1 (PBP1), found in Arabidopsis thaliana (Mouse-ear cress).